The chain runs to 255 residues: 1-(5-phosphoribosyl)-5-[(5-phosphoribosylamino)methylideneamino] imidazole-4-carboxamide isomerase (255 aa).

Asp-8 acts as the Proton acceptor in catalysis. Catalysis depends on Asp-129, which acts as the Proton donor.

This sequence belongs to the HisA/HisF family.

The protein resides in the cytoplasm. The catalysed reaction is 1-(5-phospho-beta-D-ribosyl)-5-[(5-phospho-beta-D-ribosylamino)methylideneamino]imidazole-4-carboxamide = 5-[(5-phospho-1-deoxy-D-ribulos-1-ylimino)methylamino]-1-(5-phospho-beta-D-ribosyl)imidazole-4-carboxamide. The protein operates within amino-acid biosynthesis; L-histidine biosynthesis; L-histidine from 5-phospho-alpha-D-ribose 1-diphosphate: step 4/9. This is 1-(5-phosphoribosyl)-5-[(5-phosphoribosylamino)methylideneamino] imidazole-4-carboxamide isomerase from Parasynechococcus marenigrum (strain WH8102).